The sequence spans 33 residues: U23-ctenitoxin-Pn1a (33 aa).

3 disulfides stabilise this stretch: C3–C16, C10–C21, and C15–C30.

As to expression, expressed by the venom gland.

It is found in the secreted. In terms of biological role, non-toxic to mice. This is U23-ctenitoxin-Pn1a from Phoneutria nigriventer (Brazilian armed spider).